Here is a 337-residue protein sequence, read N- to C-terminus: Glyceraldehyde-3-phosphate dehydrogenase 3, cytosolic (337 aa).

Residues 13–14 (RI), D35, and R82 contribute to the NAD(+) site. D-glyceraldehyde 3-phosphate is bound by residues 153–155 (SCT), T184, 213–214 (TG), and R236. The active-site Nucleophile is C154. Residue N318 coordinates NAD(+).

The protein belongs to the glyceraldehyde-3-phosphate dehydrogenase family. In terms of assembly, homotetramer.

Its subcellular location is the cytoplasm. It carries out the reaction D-glyceraldehyde 3-phosphate + phosphate + NAD(+) = (2R)-3-phospho-glyceroyl phosphate + NADH + H(+). Its pathway is carbohydrate degradation; glycolysis; pyruvate from D-glyceraldehyde 3-phosphate: step 1/5. In terms of biological role, key enzyme in glycolysis that catalyzes the first step of the pathway by converting D-glyceraldehyde 3-phosphate (G3P) into 3-phospho-D-glyceroyl phosphate. Essential for the maintenance of cellular ATP levels and carbohydrate metabolism. The polypeptide is Glyceraldehyde-3-phosphate dehydrogenase 3, cytosolic (GAPC3) (Oryza sativa subsp. japonica (Rice)).